The following is a 60-amino-acid chain: Large ribosomal subunit protein uL30 (60 aa).

This sequence belongs to the universal ribosomal protein uL30 family. In terms of assembly, part of the 50S ribosomal subunit.

This Baumannia cicadellinicola subsp. Homalodisca coagulata protein is Large ribosomal subunit protein uL30.